Here is an 80-residue protein sequence, read N- to C-terminus: MKRILIALVRFYQRFISPVFPPSCRFELTCSNYMIQAIEKHGFKGVLMGLARILRCHPWSKTGKDPVPDHFSLKRNQEGE.

Positions 61–80 are disordered; it reads KTGKDPVPDHFSLKRNQEGE. The segment covering 62-80 has biased composition (basic and acidic residues); the sequence is TGKDPVPDHFSLKRNQEGE.

This sequence belongs to the UPF0161 family.

It is found in the cell membrane. Its function is as follows. Could be involved in insertion of integral membrane proteins into the membrane. The sequence is that of Putative membrane protein insertion efficiency factor from Streptococcus pneumoniae serotype 2 (strain D39 / NCTC 7466).